The primary structure comprises 373 residues: Opsin Rh1 (373 aa).

Over 1 to 49 the chain is Extracellular; that stretch reads MESFAVAAAQLGPHFAPLSNGSVVDKVTPDMAHLISPYWNQFPAMDPIW. A glycan (N-linked (GlcNAc...) asparagine) is linked at Asn20. The helical transmembrane segment at 50–74 threads the bilayer; that stretch reads AKILTAYMIMIGMISWCGNGVVIYI. At 75-86 the chain is on the cytoplasmic side; sequence FATTKSLRTPAN. A helical membrane pass occupies residues 87 to 112; sequence LLVINLAISDFGIMITNTPMMGINLY. At 113 to 126 the chain is on the extracellular side; it reads FETWVLGPMMCDIY. The cysteines at positions 123 and 200 are disulfide-linked. Residues 127–146 traverse the membrane as a helical segment; sequence AGLGSAFGCSSIWSMCMISL. Residues 147–165 lie on the Cytoplasmic side of the membrane; the sequence is DRYQVIVKGMAGRPMTIPL. A helical transmembrane segment spans residues 166 to 189; the sequence is ALGKIAYIWFMSSIWCLAPAFGWS. Residues 190-213 are Extracellular-facing; that stretch reads RYVPEGNLTSCGIDYLERDWNPRS. Asn196 carries N-linked (GlcNAc...) asparagine glycosylation. Residues 214-241 traverse the membrane as a helical segment; it reads YLIFYSIFVYYIPLFLICYSYWFIIAAV. At 242–276 the chain is on the cytoplasmic side; that stretch reads SAHEKAMREQAKKMNVKSLRSSEDAEKSAEGKLAK. Residues 277–300 traverse the membrane as a helical segment; it reads VALVTITLWFMAWTPYLVINCMGL. Topologically, residues 301–307 are extracellular; the sequence is FKFEGLT. Residues 308–332 traverse the membrane as a helical segment; the sequence is PLNTIWGACFAKSAACYNPIVYGIS. Lys319 bears the N6-(retinylidene)lysine mark. The Cytoplasmic portion of the chain corresponds to 333-373; the sequence is HPKYRLALKEKCPCCVFGKVDDGKSSDAQSQATASEAESKA. A disordered region spans residues 354 to 373; it reads DGKSSDAQSQATASEAESKA. Residues 358-373 show a composition bias toward low complexity; the sequence is SDAQSQATASEAESKA.

Belongs to the G-protein coupled receptor 1 family. Opsin subfamily. In terms of processing, phosphorylated on some or all of the serine and threonine residues present in the C-terminal region.

The protein resides in the cell projection. It localises to the rhabdomere membrane. Functionally, visual pigments are the light-absorbing molecules that mediate vision. They consist of an apoprotein, opsin, covalently linked to cis-retinal. The protein is Opsin Rh1 (ninaE) of Drosophila melanogaster (Fruit fly).